The sequence spans 780 residues: MTESASSTSGQEFDVFSVMDWKDGVGTLPGSDLKFRVNEFGALEVITDENEMENVKKATATTTWMVPTAQEAPTSPPSSRPVFPPAYWTSPPGCPTVFSEKTGMPFRLKDPVKVEGLQFCENCCQYGNVDECLSGGNYCSQNCARHIKDKDQKEERDVEEDNEEEDPKCSRKKKPKLSLKADTKEDGEERDDEMENKQDVRILRGSQRARRKRRGDSAVLKQGLPPKGKKAWCWASYLEEEKAVAVPAKLFKEHQSFPYNKNGFKVGMKLEGVDPEHQSVYCVLTVAEVCGYRIKLHFDGYSDCYDFWVNADALDIHPVGWCEKTGHKLHPPKGYKEEEFNWQTYLKTCKAQAAPKSLFENQNITVIPSGFRVGMKLEAVDKKNPSFICVATVTDMVDNRFLVHFDNWDESYDYWCEASSPHIHPVGWCKEHRRTLITPPGYPNVKHFSWDKYLEETNSLPAPARAFKVKPPHGFQKKMKLEVVDKRNPMFIRVATVADTDDHRVKVHFDGWNNCYDYWIDADSPDIHPVGWCSKTGHPLQPPLSPLELMEASEHGGCSTPGCKGIGHFKRARHLGPHSAANCPYSEINLNKDRIFPDRLSGEMPPASPSFPRNKRTDANESSSSPEIRDQHADDVKEDFEERTESEMRTSHEARGAREEPTVQQAQRRSAVFLSFKSPIPCLPLRWEQQSKLLPTVAGIPASKVSKWSTDEVSEFIQSLPGCEEHGKVFKDEQIDGEAFLLMTQTDIVKIMSIKLGPALKIFNSILMFKAAEKNSHNEL.

An interaction with RBPJ. Required for transcription repressor activity on Notch target genes region spans residues 1–64; the sequence is MTESASSTSG…VKKATATTTW (64 aa). A disordered region spans residues 149 to 220; it reads DKDQKEERDV…RKRRGDSAVL (72 aa). 2 stretches are compositionally biased toward acidic residues: residues 157–166 and 185–194; these read DVEEDNEEED and EDGEERDDEM. 3 MBT repeats span residues 232-332, 340-439, and 448-543; these read WCWA…LHPP, FNWQ…LITP, and FSWD…LQPP. Residues 549–593 form a CCHHC-type; degenerate zinc finger; the sequence is LMEASEHGGCSTPGCKGIGHFKRARHLGPHSAANCPYSEINLNKD. The disordered stretch occupies residues 597–665; the sequence is PDRLSGEMPP…GAREEPTVQQ (69 aa). Residues 600-710 form an interaction with DCAF5 region; sequence LSGEMPPASP…PASKVSKWST (111 aa). A Phosphoserine modification is found at S608. K637 participates in a covalent cross-link: Glycyl lysine isopeptide (Lys-Gly) (interchain with G-Cter in SUMO2). The segment covering 643 to 661 has biased composition (basic and acidic residues); the sequence is RTESEMRTSHEARGAREEP. K704 is covalently cross-linked (Glycyl lysine isopeptide (Lys-Gly) (interchain with G-Cter in SUMO2)). The SAM domain occupies 708–772; the sequence is WSTDEVSEFI…FNSILMFKAA (65 aa).

In terms of assembly, interacts with RNF2. Interacts (via SAM domain) with SAMD1 (via SAM domain); the interaction mediates L3MBTL3 binding to chromatin. Interacts with RBPJ; the interaction is required for L3MBTL3 localization to chromatin and is impaired by Notch-derived peptides containing the intracellular domain (NICD). Interacts (via SAM domain) with KDM1A. Interacts with DCAF5. Interacts with DNMT1. Interacts with E2F1. Interacts with SOX2. Interacts with SFMBT1.

It localises to the nucleus. Its function is as follows. Is a negative regulator of Notch target genes expression, required for RBPJ-mediated transcriptional repression. It recruits KDM1A to Notch-responsive elements and promotes KDM1A-mediated H3K4me demethylation. Involved in the regulation of ubiquitin-dependent degradation of a set of methylated non-histone proteins, including SOX2, DNMT1 and E2F1. It acts as an adapter recruiting the CRL4-DCAF5 E3 ubiquitin ligase complex to methylated target proteins. Required for normal maturation of myeloid progenitor cells. The chain is Lethal(3)malignant brain tumor-like protein 3 from Homo sapiens (Human).